The primary structure comprises 349 residues: Protein RecA (349 aa).

65-72 (GPESSGKT) lines the ATP pocket.

It belongs to the RecA family.

The protein resides in the cytoplasm. Can catalyze the hydrolysis of ATP in the presence of single-stranded DNA, the ATP-dependent uptake of single-stranded DNA by duplex DNA, and the ATP-dependent hybridization of homologous single-stranded DNAs. It interacts with LexA causing its activation and leading to its autocatalytic cleavage. The sequence is that of Protein RecA from Azotobacter vinelandii (strain DJ / ATCC BAA-1303).